Here is a 2083-residue protein sequence, read N- to C-terminus: Non-reducing polyketide synthase curS2 (2083 aa).

The N-terminal acylcarrier protein transacylase domain (SAT) stretch occupies residues 9–246 (LLFGDVTDPW…NELDIHALQH (238 aa)). The 433-residue stretch at 366–798 (RDGIAIVGMA…GGNACLLLED (433 aa)) folds into the Ketosynthase family 3 (KS3) domain. Residues Cys543, His678, and His717 each act as for beta-ketoacyl synthase activity in the active site. Residues 895 to 1201 (VFVFTGQGSH…THTLQPNTHN (307 aa)) form a malonyl-CoA:ACP transacylase (MAT) domain region. Ser986 (for acyl/malonyl transferase activity) is an active-site residue. Residues 1276 to 1415 (AQYLVSKSSS…DPAKTQADWD (140 aa)) form an N-terminal hotdog fold region. The PKS/mFAS DH domain maps to 1276 to 1585 (AQYLVSKSSS…YQELPRVTWK (310 aa)). Positions 1285 to 1581 (SPKVQVVFRA…IDLRYQELPR (297 aa)) are product template (PT) domain. The C-terminal hotdog fold stretch occupies residues 1437–1585 (GHRMQPEVFY…YQELPRVTWK (149 aa)). The region spanning 1637–1714 (DFDEGLVDAI…DLRRAFGANK (78 aa)) is the Carrier domain. Ser1674 carries the post-translational modification O-(pantetheine 4'-phosphoryl)serine. Residues 1710 to 1790 (FGANKPKTSK…KMDETDTSPA (81 aa)) are disordered. The span at 1718 to 1736 (SKPQPGSTTPSSSQSSIPS) shows a compositional bias: low complexity. Over residues 1745 to 1754 (MSDTASSLGS) the composition is skewed to polar residues. The span at 1771 to 1784 (LEPKPNHHLGKMDE) shows a compositional bias: basic and acidic residues. The segment at 1811-2058 (MMADGTGTIA…LSVAGDHLDL (248 aa)) is thioesterase (TE) domain. His2065 functions as the For thioesterase activity in the catalytic mechanism.

It functions in the pathway mycotoxin biosynthesis. In terms of biological role, non-reducing polyketide synthase; part of the gene cluster that mediates the biosynthesis of 10,11-dehydrocurvularin, a prevalent fungal phytotoxin with heat shock response and immune-modulatory activities. The highly reducing polyketide synthase curS1 is responsible for biosynthesis up to the tetraketide stage. The non-reducing polyketide synthase curS2 then conducts four additional chain extension cycles, producing the unreduced part of the nascent octaketide from C-1 to C-8 in 10,11-dehydrocurvularin. The protein is Non-reducing polyketide synthase curS2 of Aspergillus terreus.